A 163-amino-acid chain; its full sequence is Troponin C, skeletal muscle (163 aa).

A Blocked amino end (Ala) modification is found at alanine 2. EF-hand domains lie at 18–53, 54–89, 94–129, and 130–163; these read EMIA…LGQN, PTKE…QMKE, KSEE…TGEH, and VTEE…EGVQ. The Ca(2+) site is built by aspartate 31, aspartate 33, aspartate 37, glutamate 42, aspartate 67, aspartate 69, serine 71, threonine 73, glutamate 78, aspartate 107, asparagine 109, aspartate 111, glutamate 118, aspartate 143, asparagine 145, aspartate 147, arginine 149, and glutamate 154.

The protein belongs to the troponin C family.

Functionally, troponin is the central regulatory protein of striated muscle contraction. Tn consists of three components: Tn-I which is the inhibitor of actomyosin ATPase, Tn-T which contains the binding site for tropomyosin and Tn-C. The binding of calcium to Tn-C abolishes the inhibitory action of Tn on actin filaments. In Gallus gallus (Chicken), this protein is Troponin C, skeletal muscle (TNNC2).